Here is a 493-residue protein sequence, read N- to C-terminus: Vacuolar-processing enzyme (493 aa).

The signal sequence occupies residues 1-19 (MGSSQLSTLLFFTIVVTFL). A glycan (N-linked (GlcNAc...) asparagine) is linked at Asn-147. His-174 is an active-site residue. Cys-216 functions as the Nucleophile in the catalytic mechanism. A disulfide bridge connects residues Cys-249 and Cys-263. 2 N-linked (GlcNAc...) asparagine glycosylation sites follow: Asn-295 and Asn-331. 2 cysteine pairs are disulfide-bonded: Cys-429–Cys-459 and Cys-441–Cys-476.

It belongs to the peptidase C13 family.

Asparagine-specific endopeptidase involved in the processing of vacuolar seed protein precursors into the mature forms. This Vicia sativa (Spring vetch) protein is Vacuolar-processing enzyme.